We begin with the raw amino-acid sequence, 115 residues long: ATP-dependent Clp protease adapter protein ClpS (115 aa).

This sequence belongs to the ClpS family. Binds to the N-terminal domain of the chaperone ClpA.

Involved in the modulation of the specificity of the ClpAP-mediated ATP-dependent protein degradation. The polypeptide is ATP-dependent Clp protease adapter protein ClpS (Leptothrix cholodnii (strain ATCC 51168 / LMG 8142 / SP-6) (Leptothrix discophora (strain SP-6))).